The chain runs to 261 residues: Syntaxin-7 (261 aa).

Ser2 bears the N-acetylserine mark. Over 2–238 (SYTPGVGGDP…DYQRKSRKTL (237 aa)) the chain is Cytoplasmic. Thr4 carries the post-translational modification Phosphothreonine. Ser45 is subject to Phosphoserine. The stretch at 47-69 (ELRQQLQQKQQYTNQLTKETDKY) forms a coiled coil. Phosphoserine is present on Ser75. Thr79 bears the Phosphothreonine mark. Ser125, Ser126, Ser129, and Ser205 each carry phosphoserine. Residues 129 to 148 (SGSFPEDSSKERNLVSWESQ) are disordered. The t-SNARE coiled-coil homology domain maps to 165-227 (LRLIHERESS…QQANQQLSRA (63 aa)). The helical; Anchor for type IV membrane protein transmembrane segment at 239 to 259 (CIIILILVIGVVIIGLIIWGL) threads the bilayer. Over 260 to 261 (NR) the chain is Vesicular.

It belongs to the syntaxin family. Forms a SNARE complex with VTI1B, STX8 and VAMP8 which functions in the homotypic fusion of late endosomes. Component of the SNARE complex composed of STX7, STX8, VAMP7 and VTI1B that is required for heterotypic fusion of late endosomes with lysosomes. Interacts with VPS11, VPS16 and VPS18. Interacts with VPS33A. Interacts with TPC1.

The protein localises to the early endosome membrane. In terms of biological role, may be involved in protein trafficking from the plasma membrane to the early endosome (EE) as well as in homotypic fusion of endocytic organelles. Mediates the endocytic trafficking from early endosomes to late endosomes and lysosomes. The polypeptide is Syntaxin-7 (STX7) (Pongo abelii (Sumatran orangutan)).